The primary structure comprises 297 residues: PDZ domain-containing protein GIPC3 (297 aa).

In terms of domain architecture, PDZ spans 97 to 177 (EVEVTKTEDA…SQPFTLRLVQ (81 aa)).

The protein belongs to the GIPC family. As to expression, expressed in adult lung, brain and testis. In the inner ear, it is expressed in the inner and outer hair cells of the organ of Corti. Also expressed in cochlear spiral ganglion neurons.

Required for postnatal maturation of the hair bundle and long-term survival of hair cells and spiral ganglion. The polypeptide is PDZ domain-containing protein GIPC3 (Gipc3) (Mus musculus (Mouse)).